The primary structure comprises 546 residues: Major facilitator superfamily transporter MPN_077 (546 aa).

The next 12 helical transmembrane spans lie at 2-22 (WGLVLLGYVLFVIEWFVIDFI), 62-82 (WTITLLRAVGSILCGVMVVKF), 88-108 (VMIMMGLMCVCFPFLIIGSPL), 179-199 (AFFIIFRSTIAIGGTTLIAYA), 220-240 (FWGFNVGLVIVAAPFLIPGVG), 248-268 (VWVVTFMILLVFAMLLVFAWF), 305-325 (LLAIAGVGTILLINPLTQTWF), 344-364 (PILLILWVMGYLLGYFLLSPF), 377-397 (FIFTANAVLVLLIVIFAATLG), 401-421 (VVGFTFVGIFTFIAGGFGWSL), 442-462 (IIFGYVWGFAYVFYSIFDIIT), and 485-505 (IAAIVLFVSLLLVINWVIIYL).

This sequence belongs to the major facilitator superfamily.

Its subcellular location is the cell membrane. The chain is Major facilitator superfamily transporter MPN_077 from Mycoplasma pneumoniae (strain ATCC 29342 / M129 / Subtype 1) (Mycoplasmoides pneumoniae).